A 91-amino-acid chain; its full sequence is Large ribosomal subunit protein uL23c (91 aa).

It belongs to the universal ribosomal protein uL23 family. In terms of assembly, part of the 50S ribosomal subunit.

It localises to the plastid. Its subcellular location is the chloroplast. Its function is as follows. Binds to 23S rRNA. This Huperzia lucidula (Shining clubmoss) protein is Large ribosomal subunit protein uL23c (rpl23).